The following is a 461-amino-acid chain: Nucleobindin-1 (461 aa).

The first 26 residues, 1-26, serve as a signal peptide directing secretion; it reads MPPSGPRGTLLLLPLLLLLLLRAVLA. The O-glycosylated at one site stretch occupies residues 42-51; sequence TESPDTGLYY. Serine 86 carries the phosphoserine; by FAM20C modification. A Phosphothreonine; by FAM20C modification is found at threonine 148. A coiled-coil region spans residues 150-218; the sequence is EARDLELLIQ…QQRRHREHPK (69 aa). A DNA-binding region spans residues 172-218; the sequence is HHEEFKRYEMLKEHERRRYLESLGEEQRKEAERKLEEQQRRHREHPK. Residues 193-210 show a composition bias toward basic and acidic residues; the sequence is SLGEEQRKEAERKLEEQQ. The segment at 193 to 221 is disordered; the sequence is SLGEEQRKEAERKLEEQQRRHREHPKVNV. Positions 228–321 are binds to GNAI2 and GNAI3; that stretch reads LKEVWEELDG…VTLEEFLAST (94 aa). EF-hand domains lie at 240 to 275 and 292 to 327; these read PNRF…ELEK and ERLR…KEFG. The Ca(2+) site is built by aspartate 253, asparagine 255, aspartate 257, glutamate 264, aspartate 305, asparagine 307, aspartate 309, and glutamate 316. The GBA signature appears at 303 to 333; that stretch reads NVDTNQDRLVTLEEFLASTQRKEFGDTGEGW. Positions 341-407 form a coiled coil; it reads AYTEEELRRF…QRKQQQQQQQ (67 aa). The segment at 368–461 is disordered; sequence LSQETEALGR…LPEVEVPQHL (94 aa). Residue serine 369 is modified to Phosphoserine; by FAM20C. Over residues 437–461 the composition is skewed to basic and acidic residues; that stretch reads DQKEVDTSEKKLLERLPEVEVPQHL.

This sequence belongs to the nucleobindin family. In terms of assembly, interacts (via GBA motif) with guanine nucleotide-binding protein G(i) alpha subunits GNAI1, GNAI2 and GNAI3 with higher affinity for GNAI1 and GNAI3 than for GNAI2. Preferentially interacts with inactive rather than active GNAI3. Interaction with GNAI3 is inhibited when NUCB1 binds calcium, probably due to a conformational change which renders the GBA motif inaccessible. Post-translationally, O-glycosylated. In terms of tissue distribution, expressed both in fetal and adult heart, lung, liver, kidney and brain, and in adult skeletal muscle, placenta and pancreas.

The protein localises to the golgi apparatus. It is found in the cis-Golgi network membrane. Its subcellular location is the cytoplasm. The protein resides in the secreted. Major calcium-binding protein of the Golgi which may have a role in calcium homeostasis. Acts as a non-receptor guanine nucleotide exchange factor which binds to and activates alpha subunits of guanine nucleotide-binding proteins (G proteins). The sequence is that of Nucleobindin-1 (NUCB1) from Homo sapiens (Human).